A 365-amino-acid polypeptide reads, in one-letter code: tRNA-specific 2-thiouridylase MnmA (365 aa).

Residues 6–13 (AMSGGVDS) and leucine 32 contribute to the ATP site. The Nucleophile role is filled by cysteine 101. Cysteine 101 and cysteine 199 are joined by a disulfide. Glycine 125 serves as a coordination point for ATP. The segment at 149–151 (KDQ) is interaction with tRNA. The active-site Cysteine persulfide intermediate is the cysteine 199.

The protein belongs to the MnmA/TRMU family.

It localises to the cytoplasm. It catalyses the reaction S-sulfanyl-L-cysteinyl-[protein] + uridine(34) in tRNA + AH2 + ATP = 2-thiouridine(34) in tRNA + L-cysteinyl-[protein] + A + AMP + diphosphate + H(+). Catalyzes the 2-thiolation of uridine at the wobble position (U34) of tRNA, leading to the formation of s(2)U34. The chain is tRNA-specific 2-thiouridylase MnmA from Corynebacterium efficiens (strain DSM 44549 / YS-314 / AJ 12310 / JCM 11189 / NBRC 100395).